The following is a 1120-amino-acid chain: Hachiman protein HamB (1120 aa).

Residues 278–452 (DGELLKNDGF…WIGEDDKAKR (175 aa)) form the Helicase ATP-binding domain. An ATP-binding site is contributed by 291–298 (MPTSSGKT). The DEAH box motif lies at 395–398 (DEGH). The 190-residue stretch at 521-710 (ATATKMLDVG…NIEKATSGLY (190 aa)) folds into the Helicase C-terminal domain.

This sequence belongs to the helicase family.

Functionally, component of antiviral defense system Hachiman, composed of HamA and HamB. Expression of Hachiman in B.subtilis (strain BEST7003) confers resistance to phages phi105, phi29, phi3T, rho14, SBSphiJ, SpBeta and SPR. Probably a helicase. The chain is Hachiman protein HamB from Bacillus cereus.